We begin with the raw amino-acid sequence, 494 residues long: MFYVQKELASHEAVIVALFEEEQTSSFVQELDKAFEGQLQVLLEEKELSTKKKAISKVHSLGKTEVKRYYFVGLGKKESYTTETLRSALGKTFKTLQAAKVQDAAILLDSFVTKKLDAIDVAHIAAEVQGLGTYELQTYKSDKKDRVELEKFTAITAEDAQEIEAALTVGYVHGRATNSARTLVNMPPNVLTATKLAEYAVELAEKYDMDYKVLEKEEMEELGMGALLAVNQGSVEPPKMIALIYKGKEEWTDVIGFVGKGITYDTGGYSLKPREGMVGMKGDMGGAAAVLGAMEIIGELRPEQNVIAVIPSTDNVVSGTAFKPDDVITSMSGKTIEVLNTDAEGRLALADGITYAKKLGANYLIDVATLTGGVIVALGNHTTGAMTNNEELFEQVLEASMETDESIWQLPIFDRDKERVRNSKFADLNNSPGREGHAVMAGTFLSEFAEDTPWVHLDIAGTSESSGAHDLGPAGATGAMVRTLATLVERFGEE.

The Mn(2+) site is built by Lys-260 and Asp-265. The active site involves Lys-272. The Mn(2+) site is built by Asp-283, Asp-342, and Glu-344. Arg-346 is an active-site residue.

This sequence belongs to the peptidase M17 family. It depends on Mn(2+) as a cofactor.

Its subcellular location is the cytoplasm. The catalysed reaction is Release of an N-terminal amino acid, Xaa-|-Yaa-, in which Xaa is preferably Leu, but may be other amino acids including Pro although not Arg or Lys, and Yaa may be Pro. Amino acid amides and methyl esters are also readily hydrolyzed, but rates on arylamides are exceedingly low.. The enzyme catalyses Release of an N-terminal amino acid, preferentially leucine, but not glutamic or aspartic acids.. Functionally, presumably involved in the processing and regular turnover of intracellular proteins. Catalyzes the removal of unsubstituted N-terminal amino acids from various peptides. This is Probable cytosol aminopeptidase from Bacillus cereus (strain AH187).